A 393-amino-acid chain; its full sequence is Peptidyl-prolyl cis-trans isomerase CYP7 (393 aa).

In terms of domain architecture, PPIase cyclophilin-type spans 8 to 196 (YLDISIDKKP…SDVRISDCGV (189 aa)). TPR repeat units follow at residues 240–273 (ANII…INEY), 292–325 (MKIY…DNVP), and 330–363 (AKAY…NPDD).

In terms of assembly, interacts with RPD3 and CNS1.

The catalysed reaction is [protein]-peptidylproline (omega=180) = [protein]-peptidylproline (omega=0). In terms of biological role, PPIases accelerate the folding of proteins. It catalyzes the cis-trans isomerization of proline imidic peptide bonds in oligopeptides. Plays a major role in negative regulation of the heat shock transcription factor (HSF). In Saccharomyces cerevisiae (strain ATCC 204508 / S288c) (Baker's yeast), this protein is Peptidyl-prolyl cis-trans isomerase CYP7 (CPR7).